The primary structure comprises 345 residues: Trans-3-hydroxy-L-proline dehydratase (345 aa).

Residue Ser90 is the Proton acceptor of the active site. Substrate-binding positions include Gly91 to Ser92, Asp252, and Gly257 to Thr258.

Belongs to the proline racemase family.

It catalyses the reaction trans-3-hydroxy-L-proline = 1-pyrroline-2-carboxylate + H2O. In terms of biological role, catalyzes the dehydration of trans-3-hydroxy-L-proline (t3LHyp) to Delta(1)-pyrroline-2-carboxylate (Pyr2C). May be involved in a degradation pathway that converts t3LHyp to L-proline, which would allow S.novella to grow on t3LHyp as a sole carbon source. The protein is Trans-3-hydroxy-L-proline dehydratase of Ancylobacter novellus (strain ATCC 8093 / DSM 506 / JCM 20403 / CCM 1077 / IAM 12100 / NBRC 12443 / NCIMB 10456) (Starkeya novella).